Here is a 109-residue protein sequence, read N- to C-terminus: Aquaporin-2 (109 aa).

At 1 to 6 the chain is on the cytoplasmic side; that stretch reads SVAFSR. A helical transmembrane segment spans residues 7 to 27; it reads AVLAEFLATLIFVFFGLGSAL. The Extracellular portion of the chain corresponds to 28 to 35; it reads SWPQALPS. Residues 36 to 54 traverse the membrane as a helical segment; that stretch reads VLQIALAFGLAIGTLVQAL. The Cytoplasmic portion of the chain corresponds to 55 to 59; it reads GHVSG. The segment at residues 60-69 is an intramembrane region (discontinuously helical); the sequence is AHINPAVTVA. The NPA 1 signature appears at 63 to 65; the sequence is NPA. Residues 70 to 80 are Cytoplasmic-facing; it reads CLVGCHVSFLR. The helical transmembrane segment at 81–102 threads the bilayer; the sequence is AAFYVAAQLLGAVAGAAILHEI. Topologically, residues 103–109 are extracellular; sequence TPPDVRG.

It belongs to the MIP/aquaporin (TC 1.A.8) family. In terms of assembly, homotetramer. Serine phosphorylation is necessary and sufficient for expression at the apical membrane. Endocytosis is not phosphorylation-dependent. In terms of processing, N-glycosylated.

Its subcellular location is the apical cell membrane. The protein localises to the basolateral cell membrane. It localises to the cell membrane. It is found in the cytoplasmic vesicle membrane. The protein resides in the golgi apparatus. Its subcellular location is the trans-Golgi network membrane. It catalyses the reaction H2O(in) = H2O(out). The catalysed reaction is glycerol(in) = glycerol(out). Forms a water-specific channel that provides the plasma membranes of renal collecting duct with high permeability to water, thereby permitting water to move in the direction of an osmotic gradient. Plays an essential role in renal water homeostasis. Could also be permeable to glycerol. This Dasypus novemcinctus (Nine-banded armadillo) protein is Aquaporin-2.